Here is an 859-residue protein sequence, read N- to C-terminus: Leucine--tRNA ligase (859 aa).

Positions proline 42–histidine 52 match the 'HIGH' region motif. Residues lysine 618 to serine 622 carry the 'KMSKS' region motif. Position 621 (lysine 621) interacts with ATP.

It belongs to the class-I aminoacyl-tRNA synthetase family.

It is found in the cytoplasm. The enzyme catalyses tRNA(Leu) + L-leucine + ATP = L-leucyl-tRNA(Leu) + AMP + diphosphate. In Shewanella oneidensis (strain ATCC 700550 / JCM 31522 / CIP 106686 / LMG 19005 / NCIMB 14063 / MR-1), this protein is Leucine--tRNA ligase.